Reading from the N-terminus, the 403-residue chain is Coenzyme A biosynthesis bifunctional protein CoaBC (403 aa).

Residues 1–197 (MISEIMHPTK…GNNLKKEGNR (197 aa)) are phosphopantothenoylcysteine decarboxylase. The tract at residues 198 to 403 (VLILNGGTVE…VEKVKKLVKS (206 aa)) is phosphopantothenate--cysteine ligase. CTP contacts are provided by Asp-285, Lys-294, and Phe-327.

This sequence in the N-terminal section; belongs to the HFCD (homo-oligomeric flavin containing Cys decarboxylase) superfamily. The protein in the C-terminal section; belongs to the PPC synthetase family. Homododecamer. The CoaC domain is responsible for dodecamer formation. Mg(2+) serves as cofactor. The cofactor is FMN.

It carries out the reaction N-[(R)-4-phosphopantothenoyl]-L-cysteine + H(+) = (R)-4'-phosphopantetheine + CO2. The catalysed reaction is (R)-4'-phosphopantothenate + L-cysteine + CTP = N-[(R)-4-phosphopantothenoyl]-L-cysteine + CMP + diphosphate + H(+). The protein operates within cofactor biosynthesis; coenzyme A biosynthesis. Functionally, catalyzes two sequential steps in the biosynthesis of coenzyme A. In the first step cysteine is conjugated to 4'-phosphopantothenate to form 4-phosphopantothenoylcysteine. In the second step the latter compound is decarboxylated to form 4'-phosphopantotheine. In Methanocaldococcus jannaschii (strain ATCC 43067 / DSM 2661 / JAL-1 / JCM 10045 / NBRC 100440) (Methanococcus jannaschii), this protein is Coenzyme A biosynthesis bifunctional protein CoaBC.